We begin with the raw amino-acid sequence, 96 residues long: Small ribosomal subunit protein bS6 (96 aa).

The protein belongs to the bacterial ribosomal protein bS6 family.

Functionally, binds together with bS18 to 16S ribosomal RNA. The chain is Small ribosomal subunit protein bS6 from Streptococcus sanguinis (strain SK36).